The chain runs to 337 residues: ELAV-like protein 1-A (337 aa).

RRM domains are found at residues 20–109 (TNLI…FARP), 117–197 (ANLY…FAAN), and 255–333 (WCIF…FKTS).

This sequence belongs to the RRM elav family. As to quaternary structure, interacts (via RRM3) with cirbp. Unable to form oligomers. Part of a ribonucleoprotein (RNP) complex, at least composed of elavl1/elrA and/or elavl2/elrB, igf2bp3/vg1RBP, ddx6/Xp54, ybx2/frgy2, lsm14b/rap55b and, in a subset of RNP complexes, stau1/staufen. Ubiquitously expressed in adults.

It localises to the cytoplasm. It is found in the cell cortex. Its function is as follows. RNA-binding protein that binds to the 3'-UTR region of mRNAs and increases their stability. Involved in embryonic stem cells (ESCs) differentiation: preferentially binds mRNAs that are not methylated by N6-methyladenosine (m6A), stabilizing them, promoting ESCs differentiation. Binds to poly-U elements and AU-rich elements (AREs) in the 3'-UTR of target mRNAs. May be involved in cytoplasmic mRNA polyadenylation. Acts cooperatively with cribp to stabilize AU-rich sequence (ARE)-containing mRNAs. May play a role during gastrulation. Required for the vegetal localization of vg1 mRNA. This Xenopus laevis (African clawed frog) protein is ELAV-like protein 1-A (elavl1-a).